The sequence spans 122 residues: Large ribosomal subunit protein uL14 (122 aa).

The protein belongs to the universal ribosomal protein uL14 family. In terms of assembly, part of the 50S ribosomal subunit. Forms a cluster with proteins L3 and L19. In the 70S ribosome, L14 and L19 interact and together make contacts with the 16S rRNA in bridges B5 and B8.

Functionally, binds to 23S rRNA. Forms part of two intersubunit bridges in the 70S ribosome. In Borrelia turicatae (strain 91E135), this protein is Large ribosomal subunit protein uL14.